We begin with the raw amino-acid sequence, 186 residues long: Dehydrin Rab18 (186 aa).

The disordered stretch occupies residues 1–186 (MASYQNRPGG…IKEKLPGGGR (186 aa)). Gly residues predominate over residues 30 to 85 (PMGGGGYGTGGGGGATGGQGYGTGGQGYGSGGQGYGTGGQGYGTGTGTEGFGTGGG). Over residues 89–98 (HGQEQLHKES) the composition is skewed to basic and acidic residues. The segment covering 105-116 (MLHRSGSGSSSS) has biased composition (low complexity). Residues 133 to 144 (KIKEKLPGHHDQ) are compositionally biased toward basic and acidic residues. The span at 152 to 164 (GGMGSGYDAGGYG) shows a compositional bias: gly residues. Positions 165–186 (GEHHEKKGMMDKIKEKLPGGGR) are enriched in basic and acidic residues.

Belongs to the plant dehydrin family.

This chain is Dehydrin Rab18 (RAB18), found in Arabidopsis thaliana (Mouse-ear cress).